Here is a 125-residue protein sequence, read N- to C-terminus: Large ribosomal subunit protein bL12 (125 aa).

The protein belongs to the bacterial ribosomal protein bL12 family. As to quaternary structure, homodimer. Part of the ribosomal stalk of the 50S ribosomal subunit. Forms a multimeric L10(L12)X complex, where L10 forms an elongated spine to which 2 to 4 L12 dimers bind in a sequential fashion. Binds GTP-bound translation factors.

Forms part of the ribosomal stalk which helps the ribosome interact with GTP-bound translation factors. Is thus essential for accurate translation. The polypeptide is Large ribosomal subunit protein bL12 (Azorhizobium caulinodans (strain ATCC 43989 / DSM 5975 / JCM 20966 / LMG 6465 / NBRC 14845 / NCIMB 13405 / ORS 571)).